We begin with the raw amino-acid sequence, 194 residues long: Imidazoleglycerol-phosphate dehydratase (194 aa).

The protein belongs to the imidazoleglycerol-phosphate dehydratase family.

The protein resides in the cytoplasm. It catalyses the reaction D-erythro-1-(imidazol-4-yl)glycerol 3-phosphate = 3-(imidazol-4-yl)-2-oxopropyl phosphate + H2O. It participates in amino-acid biosynthesis; L-histidine biosynthesis; L-histidine from 5-phospho-alpha-D-ribose 1-diphosphate: step 6/9. In Limosilactobacillus fermentum (strain NBRC 3956 / LMG 18251) (Lactobacillus fermentum), this protein is Imidazoleglycerol-phosphate dehydratase.